A 298-amino-acid polypeptide reads, in one-letter code: Rhodopsin (298 aa).

The Extracellular segment spans residues 1–15 (IHLHWYEYPPMNPMM). The chain crosses the membrane as a helical span at residues 16 to 40 (YPLLLIFMLFTGILCLAGNFVTIWV). At 41-52 (FMNTKSLRTPAN) the chain is on the cytoplasmic side. The chain crosses the membrane as a helical span at residues 53–75 (LLVVNLAMSDFLMMFTMFPPMMV). The Extracellular segment spans residues 76-89 (TCYYHTWTLGPTFC). The cysteines at positions 89 and 166 are disulfide-linked. A helical transmembrane segment spans residues 90-112 (QVYAFLGNLCGCASIWTMVFITF). The 'Ionic lock' involved in activated form stabilization motif lies at 113-115 (DRY). Over 113 to 131 (DRYNVIVKGVAGEPLSTKK) the chain is Cytoplasmic. A helical transmembrane segment spans residues 132–152 (ASLWILTIWVLSTTWCMAPFF). Residues 153–179 (GWNHYVPEGNLTGCGTDYLSEDILSRS) are Extracellular-facing. N-linked (GlcNAc...) asparagine glycosylation is present at N162. A helical transmembrane segment spans residues 180 to 201 (YLYVYSTWVYFLPLAITIYCYV). Residues 202–242 (FIIKAVAAHEKGMRDQAKKMGIKSLRNEEAQKTSAECRLAK) are Cytoplasmic-facing. Residues 243-264 (IAMTTVALWFIAWTPYLLINWV) form a helical membrane-spanning segment. Topologically, residues 265–275 (GMFARSYLSPV) are extracellular. The helical transmembrane segment at 276 to 297 (YTIWGYVFAKANAVYNPIVYAI) threads the bilayer. The residue at position 285 (K285) is an N6-(retinylidene)lysine.

This sequence belongs to the G-protein coupled receptor 1 family. Opsin subfamily. In terms of assembly, homodimer. Interacts with GNAQ. Contains one covalently linked retinal chromophore.

The protein resides in the cell projection. The protein localises to the rhabdomere membrane. Its function is as follows. Photoreceptor required for image-forming vision at low light intensity. Can use both retinal and 3-dehydroretinal as visual pigment. Light-induced isomerization of 11-cis to all-trans retinal triggers a conformational change that activates signaling via G-proteins. Signaling via GNAQ probably mediates the activation of phospholipase C. This is Rhodopsin (RHO) from Procambarus orcinus (Crayfish).